The following is a 1527-amino-acid chain: uncharacterized protein (1527 aa).

Coiled coils occupy residues 262 to 293 (NVEI…NINE), 699 to 751 (QQQQ…SEKL), 905 to 932 (NNLN…ENQI), and 1217 to 1255 (KIIS…QKSS). The tract at residues 683 to 734 (TNQEQEQDQQDQPPPPQQQQEQQQEQQQQQEQQQQQDQQQQDQQQDQQEKQQ) is disordered. The segment covering 700–728 (QQQEQQQEQQQQQEQQQQQDQQQQDQQQD) has biased composition (low complexity).

This is an uncharacterized protein from Dictyostelium discoideum (Social amoeba).